Here is a 349-residue protein sequence, read N- to C-terminus: Achromobactin transport system permease protein CbrC (349 aa).

Transmembrane regions (helical) follow at residues 32 to 52, 82 to 102, 111 to 131, 138 to 158, 168 to 188, 190 to 210, 216 to 236, 263 to 283, 290 to 310, and 325 to 345; these read LALLLVLAVMVASLGVGKLML, VLAALVGGALAVSGLILQAMI, ILGITSGASAAAVFYLSFLAA, LPLAAMIGAATAALAVYWLAW, VLTGVGVSALLMAATTFMLVF, PLTTTLSAYVWLTGSVYGASW, LGGWLLLIAPWLVLLARQVRV, VALAGAAIAWGGAMAFVGLIA, LVAPGFAGQAAMAFLSGAGLV, and DLPAGIFVSALGAPFFLYLLI.

This sequence belongs to the binding-protein-dependent transport system permease family. FecCD subfamily.

Its subcellular location is the cell inner membrane. Part of the binding-protein-dependent transport system CbrABCD for uptake of the siderophore achromobactin. Probably responsible for the translocation of the substrate across the membrane. The sequence is that of Achromobactin transport system permease protein CbrC (cbrC) from Dickeya dadantii (strain 3937) (Erwinia chrysanthemi (strain 3937)).